Consider the following 393-residue polypeptide: Probable chromate transport protein (393 aa).

The next 10 membrane-spanning stretches (helical) occupy residues 22-42 (YFLK…GYMH), 90-110 (ALVG…LGWA), 119-139 (WMQA…AISA), 146-166 (TVGT…TTIV), 201-221 (FIGL…TSLL), 231-251 (AGAF…GGVV), 261-281 (QFLD…ITTG), 282-302 (FIGF…AMFI), 327-347 (FVNG…VVLG), and 370-390 (LGKK…GVIF).

The protein belongs to the chromate ion transporter (CHR) (TC 2.A.51) family.

The protein localises to the cell membrane. Its function is as follows. May function in the active transport of chromate into the cell under sulfur-deficient conditions. The sequence is that of Probable chromate transport protein (srpC) from Synechococcus elongatus (strain ATCC 33912 / PCC 7942 / FACHB-805) (Anacystis nidulans R2).